Consider the following 427-residue polypeptide: Protein TolB homolog (427 aa).

A signal peptide spans 1-20; the sequence is MLRRIFVSTFLVFGIVSLYA.

It belongs to the TolB family.

Its subcellular location is the periplasm. The chain is Protein TolB homolog from Chlamydia caviae (strain ATCC VR-813 / DSM 19441 / 03DC25 / GPIC) (Chlamydophila caviae).